Reading from the N-terminus, the 319-residue chain is Melanoma-associated antigen B2 (319 aa).

Basic residues predominate over residues 1–17; that stretch reads MPRGQKSKLRAREKRRK. A disordered region spans residues 1–112; that stretch reads MPRGQKSKLR…TKSPSEDPLT (112 aa). Composition is skewed to low complexity over residues 39–57, 67–79, and 94–105; these read PCCS…PAAG, TTAA…VSST, and ASSSQASTSTKS. Phosphoserine is present on residues S77 and S105. Residues 111–310 form the MAGE domain; it reads LTRKSGSLVQ…CAFPTHYEEA (200 aa).

In terms of assembly, interacts with TRIM28. In terms of tissue distribution, expressed in testis and placenta, and in a significant fraction of tumors of various histologic types.

Its function is as follows. May enhance ubiquitin ligase activity of RING-type zinc finger-containing E3 ubiquitin-protein ligases. Proposed to act through recruitment and/or stabilization of the Ubl-conjugating enzyme (E2) at the E3:substrate complex. The sequence is that of Melanoma-associated antigen B2 (MAGEB2) from Homo sapiens (Human).